Here is an 85-residue protein sequence, read N- to C-terminus: Contulakin-Lt2 (85 aa).

A signal peptide spans 1–22 (MQMAYWVMVMMMVGITAPLSEG). A propeptide spanning residues 23–61 (RKLNDAIRGLVPNDLTPQLLQSLVSRRHRVFHLDNTYLK) is cleaved from the precursor. Cys-65 and Cys-70 are disulfide-bonded. The propeptide occupies 76–85 (RRRDLKKRNK).

Belongs to the conotoxin C superfamily. Expressed by the venom duct.

The protein localises to the secreted. Acts as an agonist of neurotensin receptors. It binds to human neurotensin type 1 receptor (NTSR1), rat neurotensin types 1 and 2 receptors (NTSR1/NTSR2) and mouse neurotensin type 3 receptor (SORT1). This Conus litteratus (Lettered cone) protein is Contulakin-Lt2.